A 493-amino-acid polypeptide reads, in one-letter code: 3-ketoacyl-CoA synthase 16 (493 aa).

An N-terminal signal peptide occupies residues 1-35 (MDYPMKKVKIFFNYLMAHRFKLCFLPLMVAIAVEA). A helical membrane pass occupies residues 52 to 74 (NNHTSLTMFFLYLALGSTLYLMT). The region spanning 71 to 366 (YLMTRPKPVY…FFVRFVKKKF (296 aa)) is the FAE domain. Residues cysteine 221, histidine 300, histidine 384, histidine 388, histidine 417, and asparagine 421 contribute to the active site.

Belongs to the thiolase-like superfamily. Chalcone/stilbene synthases family. As to expression, expressed in siliques.

It is found in the membrane. The catalysed reaction is a very-long-chain acyl-CoA + malonyl-CoA + H(+) = a very-long-chain 3-oxoacyl-CoA + CO2 + CoA. Its pathway is lipid metabolism; fatty acid biosynthesis. The chain is 3-ketoacyl-CoA synthase 16 from Arabidopsis thaliana (Mouse-ear cress).